The following is a 157-amino-acid chain: uncharacterized protein (157 aa).

4 consecutive transmembrane segments (helical) span residues 29-49, 52-72, 93-113, and 117-137; these read LLII…PAYF, VLHV…GFGI, LGSV…RTWL, and NEMF…TITA.

Its subcellular location is the cell membrane. This is an uncharacterized protein from Bacillus subtilis (strain 168).